Reading from the N-terminus, the 1222-residue chain is MLFNINEKGEPLVISFAPFLSPEAIKHLQENERCSDQSQKRTAQQIEAIYTSGQNILVSASAGSGKTFVMVERILDKILRGVSIDRLFISTFTVKAATELRERIENKLYSQIAQTTDFQMKVYLTEQLQSLCQADIGTMDAFAQKVVSRYGYSIGISSQFRIMQDKAEQGVLKQEVFSKLFSEFMNQKEAPVFRALVKNFSGNCKDTSAFRELVYTCYSFSQSTENPKIWLQENFLSAAKTYQRLEDIPDHDIELLLLAMQDTANQLRDVTDMEDYGQLTKAGSRSAKYTKHLTIIEKLSDWVRDFKCLYGKAGLDRLIRDVTGLIPSGNYVTVSKVKYPVFKTLHQKLKQFRHLETILMYQKDCFPLLEQLQDFVLAFSEAYLAVKIQESAFEFSDIAHFAIKILEENTDIRQSYQQHYHEVMVDEYQDNNHMQERLLTLLSNGHNRFMVGDIKQSIYRFRQADPQIFNQKFRDYQKKPEQGKVILLKENFRSQSEVLNVSNAVFSHLMDESVGDVLYDEQHQLIAGSHAQTVPYLDRRAQLLLYNSDKDDGNAPSDSEGISFSEVTIVAKEIIKLHNDKGVPFEDITLLVSSRTRNDIISHTFNQYGIPIVTDGGQQNYLKSVEVMVMLDTLRTINNPRNDYALVALLRSPMFAFDEDDLARIALQKDNELDKDCLYDKIQRAVIGRGAHPELIHDTLLGKLNVFLKTLKSWRRYAKLGSLYDLIWKIFNDRFYFDFVASQAKAEQAQANLYALALRANQFEKSGYKGLYRFIKMIDKVLETQNDLADVEVAAPKQAVNLMTIHKSKGLQFPYVFILNCDKRFSMTDIHKSFILNRQHGIGIKYLADIKGLLGETTLNSVKVSMETLPYQLNKQELRLATLSEQMRLLYVAMTRAEKKVYFIGKASKSKSQEITDPKKLDKLLPLALREQLLTFQDWLLAIADIFSTEDLYFDVRFIEDSDLTQESVGRLQTPQLLNPDDLKDNRQSETIARALDMLEAVSQLNANYEAAIHLPTVRTPSQLKAAYEPLLEPIGVDIIEKSSRSLSDFTLPHFSKKAKVEASHIGSALHQLMQVLPLSKPINQQTLLDALRGIDSNEEVKTALDLKKIESFFCDTSLGQFFQTYQKHLYREAPFAILKVDPISQEEYVLRGIIDAYFLFDDHIVLVDYKTDKYKQPIELKKRYQQQLELYAEALTQTYKLPVTKRYLVLMGGGKPEIVEV.

Residues 39–495 (QKRTAQQIEA…ILLKENFRSQ (457 aa)) form the UvrD-like helicase ATP-binding domain. ATP is bound at residue 60–67 (ASAGSGKT). The UvrD-like helicase C-terminal domain maps to 524–810 (QLIAGSHAQT…NLMTIHKSKG (287 aa)).

The protein belongs to the helicase family. AddA subfamily. Heterodimer of AddA and AddB/RexB. Mg(2+) is required as a cofactor.

It catalyses the reaction Couples ATP hydrolysis with the unwinding of duplex DNA by translocating in the 3'-5' direction.. The enzyme catalyses ATP + H2O = ADP + phosphate + H(+). Its function is as follows. The heterodimer acts as both an ATP-dependent DNA helicase and an ATP-dependent, dual-direction single-stranded exonuclease. Recognizes the chi site generating a DNA molecule suitable for the initiation of homologous recombination. The AddA nuclease domain is required for chi fragment generation; this subunit has the helicase and 3' -&gt; 5' nuclease activities. The sequence is that of ATP-dependent helicase/nuclease subunit A from Streptococcus pyogenes serotype M4 (strain MGAS10750).